The following is a 500-amino-acid chain: Probable cytosol aminopeptidase (500 aa).

Positions 265 and 270 each coordinate Mn(2+). Lysine 277 is a catalytic residue. 3 residues coordinate Mn(2+): aspartate 288, aspartate 347, and glutamate 349. Residue arginine 351 is part of the active site.

The protein belongs to the peptidase M17 family. The cofactor is Mn(2+).

The protein resides in the cytoplasm. The enzyme catalyses Release of an N-terminal amino acid, Xaa-|-Yaa-, in which Xaa is preferably Leu, but may be other amino acids including Pro although not Arg or Lys, and Yaa may be Pro. Amino acid amides and methyl esters are also readily hydrolyzed, but rates on arylamides are exceedingly low.. It carries out the reaction Release of an N-terminal amino acid, preferentially leucine, but not glutamic or aspartic acids.. Presumably involved in the processing and regular turnover of intracellular proteins. Catalyzes the removal of unsubstituted N-terminal amino acids from various peptides. The protein is Probable cytosol aminopeptidase of Rickettsia typhi (strain ATCC VR-144 / Wilmington).